A 1187-amino-acid chain; its full sequence is BAI1-associated protein 3 (1187 aa).

Residues 55-81 (SFRRRTEQDPGSASADPQEPATGAWKP) form a disordered region. The C2 1 domain occupies 176 to 335 (SLEEHTEAIE…VKSARANGTA (160 aa)). Positions 211, 217, 295, and 297 each coordinate Ca(2+). An MHD1 domain is found at 663 to 784 (FELYLTLADL…EATLFYTELL (122 aa)). In terms of domain architecture, MHD2 spans 888-996 (DEAVAPLMKY…CSTRECIEQF (109 aa)). In terms of domain architecture, C2 2 spans 1010 to 1136 (RFGRLSVRCH…GVARPQVGGG (127 aa)). Ca(2+) is bound by residues Leu-1040, Asp-1041, Asp-1047, Asp-1105, Asp-1107, Ser-1110, and Asp-1113.

Belongs to the unc-13 family. In terms of assembly, interacts with ADGRB1; this interaction is direct. Interacts with endosomal SNARE proteins VAMP3, VAMP4, STX6 and STX16; this interaction is increased in the presence of calcium. Ca(2+) is required as a cofactor. In terms of tissue distribution, predominantly expressed in brain. Also expressed in nonneural tissues such as breast and testes epithelium.

It is found in the cytoplasm. The protein resides in the cytosol. Its subcellular location is the recycling endosome membrane. The protein localises to the late endosome membrane. It localises to the golgi apparatus. It is found in the trans-Golgi network membrane. The protein resides in the cell membrane. Functionally, functions in endosome to Golgi retrograde transport. In response to calcium influx, may interact with SNARE fusion receptors and membrane phospholipids to mediate endosome fusion with the trans-Golgi network. By promoting the recycling of secretory vesicle transmembrane proteins, it indirectly controls dense-core secretory vesicle biogenesis, maturation and their ability to mediate the constitutive and regulated secretion of neurotransmitters and hormones. May regulate behavior and food intake by controlling calcium-stimulated exocytosis of neurotransmitters including NPY and serotonin and hormones like insulin. Proposed to play a role in hypothalamic neuronal firing by modulating gamma-aminobutyric acid (GABA)ergic inhibitory neurotransmission. This Homo sapiens (Human) protein is BAI1-associated protein 3.